A 434-amino-acid chain; its full sequence is Methylenetetrahydrofolate--tRNA-(uracil-5-)-methyltransferase TrmFO (434 aa).

10 to 15 (GAGLAG) contacts FAD.

This sequence belongs to the MnmG family. TrmFO subfamily. The cofactor is FAD.

It is found in the cytoplasm. It catalyses the reaction uridine(54) in tRNA + (6R)-5,10-methylene-5,6,7,8-tetrahydrofolate + NADH + H(+) = 5-methyluridine(54) in tRNA + (6S)-5,6,7,8-tetrahydrofolate + NAD(+). The enzyme catalyses uridine(54) in tRNA + (6R)-5,10-methylene-5,6,7,8-tetrahydrofolate + NADPH + H(+) = 5-methyluridine(54) in tRNA + (6S)-5,6,7,8-tetrahydrofolate + NADP(+). Functionally, catalyzes the folate-dependent formation of 5-methyl-uridine at position 54 (M-5-U54) in all tRNAs. The sequence is that of Methylenetetrahydrofolate--tRNA-(uracil-5-)-methyltransferase TrmFO from Bacillus cereus (strain ATCC 10987 / NRS 248).